The sequence spans 352 residues: WAT1-related protein At1g11450 (352 aa).

Helical transmembrane passes span 14–34 (WPPMIVMVTSQVAMGSVNALV), 46–66 (IIGAYRMAISSFILVPIAYFL), 83–103 (FISGLLGASLMQFFYLLGLSY), 107–127 (TVACALVSLMPAITFAFALIL), 139–159 (AGMIKVMGTLICISGALFLTF), 187–207 (WLLGCLYLVIGIVLLSLWILF), 219–239 (FSSTCLMSIFAAFQCALLSLY), 253–273 (FVIGVIIYAGVIGQAMSTVAA), 283–303 (VFASAIMPVSLISATLFDFLI), and 308–328 (LYLGSVIGSVGTIIGLYVFLW). EamA domains follow at residues 27–157 (MGSV…ALFL) and 192–335 (LYLV…KETE).

It belongs to the drug/metabolite transporter (DMT) superfamily. Plant drug/metabolite exporter (P-DME) (TC 2.A.7.4) family.

The protein resides in the membrane. The chain is WAT1-related protein At1g11450 from Arabidopsis thaliana (Mouse-ear cress).